Reading from the N-terminus, the 160-residue chain is Transcriptional repressor NrdR (160 aa).

A zinc finger spans residues Cys3–Cys34. The ATP-cone domain maps to Leu49–Asp139.

Belongs to the NrdR family. Zn(2+) is required as a cofactor.

Negatively regulates transcription of bacterial ribonucleotide reductase nrd genes and operons by binding to NrdR-boxes. The protein is Transcriptional repressor NrdR of Bartonella bacilliformis (strain ATCC 35685 / KC583 / Herrer 020/F12,63).